Reading from the N-terminus, the 224-residue chain is Peptidyl-prolyl cis-trans isomerase FKBP3 (224 aa).

At alanine 2 the chain carries N-acetylalanine. A Phosphoserine modification is found at serine 36. The segment at 88–118 (VKLSDDKPKDSKSEETLDEGPPKYTKSILKK) is disordered. Residues 89–102 (KLSDDKPKDSKSEE) show a composition bias toward basic and acidic residues. Lysine 99 bears the N6-acetyllysine mark. The PPIase FKBP-type domain occupies 128–224 (GDVVHCWYTG…IFEVELVDID (97 aa)). At serine 152 the chain carries Phosphoserine. An N6-acetyllysine modification is found at lysine 170.

Belongs to the FKBP-type PPIase family.

The protein localises to the nucleus. It catalyses the reaction [protein]-peptidylproline (omega=180) = [protein]-peptidylproline (omega=0). Inhibited preferentially by rapamycin over FK506. Functionally, FK506- and rapamycin-binding proteins (FKBPs) constitute a family of receptors for the two immunosuppressants which inhibit T-cell proliferation by arresting two distinct cytoplasmic signal transmission pathways. PPIases accelerate the folding of proteins. The sequence is that of Peptidyl-prolyl cis-trans isomerase FKBP3 (Fkbp3) from Mus musculus (Mouse).